The chain runs to 668 residues: DNA ligase (668 aa).

NAD(+) is bound by residues 31-35 (DAEYD), 80-81 (SL), and glutamate 112. The active-site N6-AMP-lysine intermediate is lysine 114. Residues arginine 135, glutamate 172, lysine 289, and lysine 313 each contribute to the NAD(+) site. Residues cysteine 407, cysteine 410, cysteine 425, and cysteine 431 each coordinate Zn(2+). In terms of domain architecture, BRCT spans 591 to 668 (SVPQPLAGKV…NEEQLIELLN (78 aa)).

It belongs to the NAD-dependent DNA ligase family. LigA subfamily. Mg(2+) serves as cofactor. It depends on Mn(2+) as a cofactor.

It catalyses the reaction NAD(+) + (deoxyribonucleotide)n-3'-hydroxyl + 5'-phospho-(deoxyribonucleotide)m = (deoxyribonucleotide)n+m + AMP + beta-nicotinamide D-nucleotide.. DNA ligase that catalyzes the formation of phosphodiester linkages between 5'-phosphoryl and 3'-hydroxyl groups in double-stranded DNA using NAD as a coenzyme and as the energy source for the reaction. It is essential for DNA replication and repair of damaged DNA. The chain is DNA ligase from Aliivibrio fischeri (strain MJ11) (Vibrio fischeri).